A 424-amino-acid polypeptide reads, in one-letter code: Riboflavin biosynthesis protein RibBA (424 aa).

The segment at 1–204 (MTRFDSIERA…IADLIAWRRK (204 aa)) is DHBP synthase. Residues 28–29 (RE), Asp-33, 141–145 (RPGHT), and Glu-165 contribute to the D-ribulose 5-phosphate site. Glu-29 contacts Mg(2+). Residue His-144 participates in Mg(2+) binding. The tract at residues 205–424 (HEKHVLRIAE…QNTAQPGTAL (220 aa)) is GTP cyclohydrolase II. 259-263 (RVHSE) contacts GTP. Residues Cys-264, Cys-275, and Cys-277 each coordinate Zn(2+). Residues Gln-280, 303-305 (EGR), and Thr-325 contribute to the GTP site. Asp-337 (proton acceptor; for GTP cyclohydrolase activity) is an active-site residue. Arg-339 acts as the Nucleophile; for GTP cyclohydrolase activity in catalysis. Residues Thr-360 and Lys-365 each coordinate GTP.

This sequence in the N-terminal section; belongs to the DHBP synthase family. The protein in the C-terminal section; belongs to the GTP cyclohydrolase II family. It depends on Mg(2+) as a cofactor. The cofactor is Mn(2+). Zn(2+) serves as cofactor.

It carries out the reaction D-ribulose 5-phosphate = (2S)-2-hydroxy-3-oxobutyl phosphate + formate + H(+). It catalyses the reaction GTP + 4 H2O = 2,5-diamino-6-hydroxy-4-(5-phosphoribosylamino)-pyrimidine + formate + 2 phosphate + 3 H(+). It participates in cofactor biosynthesis; riboflavin biosynthesis; 2-hydroxy-3-oxobutyl phosphate from D-ribulose 5-phosphate: step 1/1. It functions in the pathway cofactor biosynthesis; riboflavin biosynthesis; 5-amino-6-(D-ribitylamino)uracil from GTP: step 1/4. Functionally, catalyzes the conversion of D-ribulose 5-phosphate to formate and 3,4-dihydroxy-2-butanone 4-phosphate. Catalyzes the conversion of GTP to 2,5-diamino-6-ribosylamino-4(3H)-pyrimidinone 5'-phosphate (DARP), formate and pyrophosphate. The polypeptide is Riboflavin biosynthesis protein RibBA (Rhodococcus erythropolis (strain PR4 / NBRC 100887)).